The sequence spans 300 residues: 4-hydroxy-tetrahydrodipicolinate synthase (300 aa).

Threonine 45 lines the pyruvate pocket. Tyrosine 140 (proton donor/acceptor) is an active-site residue. Lysine 169 functions as the Schiff-base intermediate with substrate in the catalytic mechanism. Isoleucine 210 is a pyruvate binding site.

This sequence belongs to the DapA family. As to quaternary structure, homotetramer; dimer of dimers.

The protein resides in the cytoplasm. The enzyme catalyses L-aspartate 4-semialdehyde + pyruvate = (2S,4S)-4-hydroxy-2,3,4,5-tetrahydrodipicolinate + H2O + H(+). It functions in the pathway amino-acid biosynthesis; L-lysine biosynthesis via DAP pathway; (S)-tetrahydrodipicolinate from L-aspartate: step 3/4. Functionally, catalyzes the condensation of (S)-aspartate-beta-semialdehyde [(S)-ASA] and pyruvate to 4-hydroxy-tetrahydrodipicolinate (HTPA). This is 4-hydroxy-tetrahydrodipicolinate synthase from Helicobacter pylori (strain G27).